A 389-amino-acid chain; its full sequence is Phospho-N-acetylmuramoyl-pentapeptide-transferase (389 aa).

10 helical membrane passes run 25–45, 73–93, 97–117, 135–155, 190–210, 222–242, 258–278, 286–306, 311–331, and 366–386; these read RAVM…PWVI, TMGG…WGDL, FIWI…VDDY, FWQS…VSEA, ISYP…IVGA, GLVI…AYVM, GAGE…AFLW, VFMG…VAVI, IVLF…MLQV, and QVVV…LSTL.

The protein belongs to the glycosyltransferase 4 family. MraY subfamily. Mg(2+) serves as cofactor.

The protein localises to the cell inner membrane. The enzyme catalyses UDP-N-acetyl-alpha-D-muramoyl-L-alanyl-gamma-D-glutamyl-meso-2,6-diaminopimeloyl-D-alanyl-D-alanine + di-trans,octa-cis-undecaprenyl phosphate = di-trans,octa-cis-undecaprenyl diphospho-N-acetyl-alpha-D-muramoyl-L-alanyl-D-glutamyl-meso-2,6-diaminopimeloyl-D-alanyl-D-alanine + UMP. It functions in the pathway cell wall biogenesis; peptidoglycan biosynthesis. In terms of biological role, catalyzes the initial step of the lipid cycle reactions in the biosynthesis of the cell wall peptidoglycan: transfers peptidoglycan precursor phospho-MurNAc-pentapeptide from UDP-MurNAc-pentapeptide onto the lipid carrier undecaprenyl phosphate, yielding undecaprenyl-pyrophosphoryl-MurNAc-pentapeptide, known as lipid I. This is Phospho-N-acetylmuramoyl-pentapeptide-transferase from Burkholderia mallei (strain NCTC 10247).